A 100-amino-acid chain; its full sequence is NADH-quinone oxidoreductase subunit K (100 aa).

The next 3 helical transmembrane spans lie at 3-23 (LNAY…GIFL), 29-49 (ISIM…FVAF), and 60-80 (IFTF…LAIL).

This sequence belongs to the complex I subunit 4L family. As to quaternary structure, NDH-1 is composed of 14 different subunits. Subunits NuoA, H, J, K, L, M, N constitute the membrane sector of the complex.

Its subcellular location is the cell inner membrane. It catalyses the reaction a quinone + NADH + 5 H(+)(in) = a quinol + NAD(+) + 4 H(+)(out). In terms of biological role, NDH-1 shuttles electrons from NADH, via FMN and iron-sulfur (Fe-S) centers, to quinones in the respiratory chain. The immediate electron acceptor for the enzyme in this species is believed to be ubiquinone. Couples the redox reaction to proton translocation (for every two electrons transferred, four hydrogen ions are translocated across the cytoplasmic membrane), and thus conserves the redox energy in a proton gradient. This Magnetococcus marinus (strain ATCC BAA-1437 / JCM 17883 / MC-1) protein is NADH-quinone oxidoreductase subunit K.